The chain runs to 350 residues: Biotin synthase (350 aa).

The 228-residue stretch at 41-268 folds into the Radical SAM core domain; sequence NEVQISRLLS…KSRVRLSAGR (228 aa). 3 residues coordinate [4Fe-4S] cluster: Cys-56, Cys-60, and Cys-63. Residues Cys-100, Cys-131, Cys-191, and Arg-263 each contribute to the [2Fe-2S] cluster site.

This sequence belongs to the radical SAM superfamily. Biotin synthase family. As to quaternary structure, homodimer. [4Fe-4S] cluster is required as a cofactor. It depends on [2Fe-2S] cluster as a cofactor.

The catalysed reaction is (4R,5S)-dethiobiotin + (sulfur carrier)-SH + 2 reduced [2Fe-2S]-[ferredoxin] + 2 S-adenosyl-L-methionine = (sulfur carrier)-H + biotin + 2 5'-deoxyadenosine + 2 L-methionine + 2 oxidized [2Fe-2S]-[ferredoxin]. Its pathway is cofactor biosynthesis; biotin biosynthesis; biotin from 7,8-diaminononanoate: step 2/2. Its function is as follows. Catalyzes the conversion of dethiobiotin (DTB) to biotin by the insertion of a sulfur atom into dethiobiotin via a radical-based mechanism. The chain is Biotin synthase from Shewanella piezotolerans (strain WP3 / JCM 13877).